A 747-amino-acid polypeptide reads, in one-letter code: ATPase family gene 2 protein homolog B (747 aa).

At M1 the chain carries N-acetylmethionine. ATP is bound by residues 234–241 and 500–507; these read GPPGVGKT and GPPGCAKT.

This sequence belongs to the AAA ATPase family. AFG2 subfamily. Part of the 55LCC heterohexameric ATPase complex composed at least of AIRIM, AFG2A, AFG2B and CINP. Associates with pre-60S ribosomal particles. Expressed in neurons; also expressed at lower level in astrocytes, oligodendrocytes and microglia.

The protein resides in the cytoplasm. Its subcellular location is the cytoskeleton. It is found in the spindle. It localises to the nucleus. It catalyses the reaction ATP + H2O = ADP + phosphate + H(+). Its activity is regulated as follows. In the context of 55LCC heterohexameric ATPase complex, the ATPase activity is stimulated by DNA binding and inhibited in presence of RNA. Functionally, ATP-dependent chaperone part of the 55LCC heterohexameric ATPase complex which is chromatin-associated and promotes replisome proteostasis to maintain replication fork progression and genome stability. Required for replication fork progression, sister chromatid cohesion, and chromosome stability. The ATPase activity is specifically enhanced by replication fork DNA and is coupled to cysteine protease-dependent cleavage of replisome substrates in response to replication fork damage. Uses ATPase activity to process replisome substrates in S-phase, facilitating their proteolytic turnover from chromatin to ensure DNA replication and mitotic fidelity. Plays an essential role in the cytoplasmic maturation steps of pre-60S ribosomal particles by promoting the release of shuttling protein RSL24D1/RLP24 from the pre-ribosomal particles. This chain is ATPase family gene 2 protein homolog B (Afg2b), found in Rattus norvegicus (Rat).